The primary structure comprises 303 residues: Phosphatidylglycerol--prolipoprotein diacylglyceryl transferase (303 aa).

4 helical membrane passes run 18 to 38, 58 to 78, 106 to 126, and 133 to 153; these read LGPF…LVGL, LLPI…VAFE, IWGG…SIIF, and EHFW…QAIG. Residue Arg-154 participates in a 1,2-diacyl-sn-glycero-3-phospho-(1'-sn-glycerol) binding. 3 helical membrane passes run 193-213, 223-243, and 266-286; these read PTFL…IFLF, LPPG…RFWI, and IAQL…WRIY.

The protein belongs to the Lgt family.

The protein resides in the cell inner membrane. It catalyses the reaction L-cysteinyl-[prolipoprotein] + a 1,2-diacyl-sn-glycero-3-phospho-(1'-sn-glycerol) = an S-1,2-diacyl-sn-glyceryl-L-cysteinyl-[prolipoprotein] + sn-glycerol 1-phosphate + H(+). It participates in protein modification; lipoprotein biosynthesis (diacylglyceryl transfer). Functionally, catalyzes the transfer of the diacylglyceryl group from phosphatidylglycerol to the sulfhydryl group of the N-terminal cysteine of a prolipoprotein, the first step in the formation of mature lipoproteins. The polypeptide is Phosphatidylglycerol--prolipoprotein diacylglyceryl transferase (Prochlorococcus marinus (strain NATL2A)).